The chain runs to 314 residues: Ribose-phosphate pyrophosphokinase (314 aa).

ATP is bound by residues 37–39 (DGE) and 96–97 (RQ). Residues histidine 131 and aspartate 170 each contribute to the Mg(2+) site. Residue lysine 194 is part of the active site. D-ribose 5-phosphate-binding positions include arginine 196, aspartate 220, and 224–228 (DTGGT).

The protein belongs to the ribose-phosphate pyrophosphokinase family. Class I subfamily. As to quaternary structure, homohexamer. It depends on Mg(2+) as a cofactor.

The protein resides in the cytoplasm. It carries out the reaction D-ribose 5-phosphate + ATP = 5-phospho-alpha-D-ribose 1-diphosphate + AMP + H(+). Its pathway is metabolic intermediate biosynthesis; 5-phospho-alpha-D-ribose 1-diphosphate biosynthesis; 5-phospho-alpha-D-ribose 1-diphosphate from D-ribose 5-phosphate (route I): step 1/1. Its function is as follows. Involved in the biosynthesis of the central metabolite phospho-alpha-D-ribosyl-1-pyrophosphate (PRPP) via the transfer of pyrophosphoryl group from ATP to 1-hydroxyl of ribose-5-phosphate (Rib-5-P). The protein is Ribose-phosphate pyrophosphokinase of Vibrio cholerae serotype O1 (strain ATCC 39315 / El Tor Inaba N16961).